Consider the following 356-residue polypeptide: Anthranilate phosphoribosyltransferase (356 aa).

5-phospho-alpha-D-ribose 1-diphosphate contacts are provided by residues G96, G99 to D100, T104, N106 to T109, K124 to G132, and S136. G96 provides a ligand contact to anthranilate. Position 108 (S108) interacts with Mg(2+). N127 contributes to the anthranilate binding site. R182 is a binding site for anthranilate. Positions 241 and 242 each coordinate Mg(2+).

It belongs to the anthranilate phosphoribosyltransferase family. In terms of assembly, homodimer. The cofactor is Mg(2+).

It catalyses the reaction N-(5-phospho-beta-D-ribosyl)anthranilate + diphosphate = 5-phospho-alpha-D-ribose 1-diphosphate + anthranilate. Its pathway is amino-acid biosynthesis; L-tryptophan biosynthesis; L-tryptophan from chorismate: step 2/5. Catalyzes the transfer of the phosphoribosyl group of 5-phosphorylribose-1-pyrophosphate (PRPP) to anthranilate to yield N-(5'-phosphoribosyl)-anthranilate (PRA). This chain is Anthranilate phosphoribosyltransferase, found in Trichodesmium erythraeum (strain IMS101).